An 86-amino-acid polypeptide reads, in one-letter code: Small ribosomal subunit protein uS15 (86 aa).

Polar residues predominate over residues 1-10 (MSIDTQSIIE). The interval 1 to 21 (MSIDTQSIIENNKRSAHDTGS) is disordered.

It belongs to the universal ribosomal protein uS15 family. In terms of assembly, part of the 30S ribosomal subunit. Forms a bridge to the 50S subunit in the 70S ribosome, contacting the 23S rRNA.

Its function is as follows. One of the primary rRNA binding proteins, it binds directly to 16S rRNA where it helps nucleate assembly of the platform of the 30S subunit by binding and bridging several RNA helices of the 16S rRNA. In terms of biological role, forms an intersubunit bridge (bridge B4) with the 23S rRNA of the 50S subunit in the ribosome. The chain is Small ribosomal subunit protein uS15 from Xylella fastidiosa (strain M23).